The following is a 141-amino-acid chain: VLSPDDKKHVKDAWGKVGEHAGQYGAEALERMFLSFPTTKTYFPHFDLSHGSDQVKKHGKKVADALTLAVGHVDDMPQALSKLSDLHAHKLRVDPVNFKLLSHCLLVTLAAHLPAEFTPAVHASLDKFLASVSTVLTSKYR.

Residues 1 to 141 (VLSPDDKKHV…VSTVLTSKYR (141 aa)) form the Globin domain. Residue serine 3 is modified to Phosphoserine. N6-succinyllysine occurs at positions 7 and 11. Lysine 16 carries the post-translational modification N6-acetyllysine; alternate. Lysine 16 is subject to N6-succinyllysine; alternate. Tyrosine 24 is modified (phosphotyrosine). Serine 35 carries the phosphoserine modification. Lysine 40 carries the post-translational modification N6-succinyllysine. Residue serine 49 is modified to Phosphoserine. Histidine 58 is an O2 binding site. Histidine 87 provides a ligand contact to heme b. At serine 102 the chain carries Phosphoserine. Residue threonine 108 is modified to Phosphothreonine. 2 positions are modified to phosphoserine: serine 124 and serine 131. Threonine 134 and threonine 137 each carry phosphothreonine. Phosphoserine is present on serine 138.

The protein belongs to the globin family. In terms of assembly, heterotetramer of two alpha chains and two beta chains. In terms of tissue distribution, red blood cells.

Involved in oxygen transport from the lung to the various peripheral tissues. Its function is as follows. Hemopressin acts as an antagonist peptide of the cannabinoid receptor CNR1. Hemopressin-binding efficiently blocks cannabinoid receptor CNR1 and subsequent signaling. The polypeptide is Hemoglobin subunit alpha (HBA) (Theropithecus gelada (Gelada baboon)).